Consider the following 304-residue polypeptide: MSKKLTFQEIILTLQQFWNDQGCMLMQAYDNEKGAGTMSPYTFLRAIGPEPWNAAYVEPSRRPADGRYGENPNRLYQHHQFQVVMKPSPSNIQELYLKSLELLGINPLEHDIRFVEDNWENPSTGSAGLGWEVWLDGMEITQFTYFQQVGGLQTGPVTSEVTYGLERLASYIQEVDSVYDIEWAPGVKYGEIFTQPEYEHSKYSFEISDQVMLLENFEKFEREAKRALEEGLVHPAYDYVLKCSHTFNLLDARGAVSVTERAGYIARIRNLARVVAKTFVAERKKLGFPLLDEETRIKLLAEED.

This sequence belongs to the class-II aminoacyl-tRNA synthetase family. In terms of assembly, tetramer of two alpha and two beta subunits.

Its subcellular location is the cytoplasm. The catalysed reaction is tRNA(Gly) + glycine + ATP = glycyl-tRNA(Gly) + AMP + diphosphate. This is Glycine--tRNA ligase alpha subunit from Streptococcus agalactiae serotype Ia (strain ATCC 27591 / A909 / CDC SS700).